A 116-amino-acid polypeptide reads, in one-letter code: Large ribosomal subunit protein bL20c (116 aa).

The protein belongs to the bacterial ribosomal protein bL20 family.

The protein localises to the plastid. Its subcellular location is the chloroplast. Its function is as follows. Binds directly to 23S ribosomal RNA and is necessary for the in vitro assembly process of the 50S ribosomal subunit. It is not involved in the protein synthesizing functions of that subunit. This Rhodomonas salina (Cryptomonas salina) protein is Large ribosomal subunit protein bL20c.